A 623-amino-acid polypeptide reads, in one-letter code: Cell pattern formation-associated protein stuA (623 aa).

Positions 13 to 31 are enriched in polar residues; the sequence is QHMQSAGQPQQPQTVTSGP. A disordered region spans residues 13-111; the sequence is QHMQSAGQPQ…DTTGQHPPPG (99 aa). Residues 115 to 221 enclose the HTH APSES-type domain; the sequence is RVTATLWEDE…HNIGALLYHP (107 aa). A DNA-binding region (H-T-H motif) is located at residues 149 to 170; that stretch reads GTKLLNVAGMTRGRRDGILKSE. Disordered regions lie at residues 232–270 and 332–623; these read AAAE…PQSS and ARSM…PRQR. Polar residues predominate over residues 335–374; it reads MPTTPATTPPGSMQPYGSAQSFDGSRQQMYNAPSQQSPYP. The span at 396 to 408 shows a compositional bias: low complexity; that stretch reads GPPSSRPSGSAPS. Residues 423-446 show a composition bias toward basic and acidic residues; that stretch reads EHGHQSHAGEEDGEHEQHDAEYTH. Positions 542-553 are enriched in low complexity; the sequence is APPADMANPMPN. The interval 569–594 is nuclear localization domain; that stretch reads KRGREGDDDLSRPVGDVPGMDMKRRK. A compositionally biased stretch (basic and acidic residues) spans 570 to 579; sequence RGREGDDDLS.

It belongs to the EFG1/PHD1/stuA family.

Its subcellular location is the nucleus. Its function is as follows. Transcription factor that regulates asexual reproduction. Binds the StuA-response elements (StRE) with the consensus sequence 5'-(A/T)CGCG(T/A)N(A/C)-3' at the promoters of target genes. Controls conidiation by positively regulating the expression of brlA and abaA. Positively regulates the cephalosporin biosynthesis gene cluster. Also involved hyphal fragmentation and cell wall integrity. This Hapsidospora chrysogenum (strain ATCC 11550 / CBS 779.69 / DSM 880 / IAM 14645 / JCM 23072 / IMI 49137) (Acremonium chrysogenum) protein is Cell pattern formation-associated protein stuA.